A 156-amino-acid polypeptide reads, in one-letter code: Perlucin-like protein (156 aa).

A signal peptide spans M1–G22. 3 disulfide bridges follow: C30–C41, C58–C156, and C131–C147. Residues Y37–C156 form the C-type lectin domain.

As to expression, component of the organic matrix of calcified shell layers like nacre and prisms.

It localises to the secreted. The chain is Perlucin-like protein from Mytilus galloprovincialis (Mediterranean mussel).